Here is a 165-residue protein sequence, read N- to C-terminus: Minor capsid protein VP2 (165 aa).

It belongs to the sapovirus VP2 family. As to quaternary structure, homooligomer. The portal-like structure consists in 12 copies of VP2. Interacts with capsid protein VP1.

It localises to the virion. The protein resides in the host cytoplasm. Functionally, minor structural protein that forms a portal-like structure at a unique three-fold axis of symmetry, following binding to the host receptor. The channel formed by VP2 may allow the delivery of the viral genome through the host endosomal membrane. This chain is Minor capsid protein VP2, found in Homo sapiens (Human).